The following is a 251-amino-acid chain: Probable transcriptional regulatory protein Cpar_0525 (251 aa).

It belongs to the TACO1 family.

Its subcellular location is the cytoplasm. In Chlorobaculum parvum (strain DSM 263 / NCIMB 8327) (Chlorobium vibrioforme subsp. thiosulfatophilum), this protein is Probable transcriptional regulatory protein Cpar_0525.